The sequence spans 67 residues: Teratocyte protein CftICK-II (67 aa).

The N-terminal stretch at 1-25 (MVKSLLFAIGYLIFLLVTRVNVINA) is a signal peptide. Cystine bridges form between Cys28–Cys42, Cys35–Cys46, and Cys41–Cys57.

Abundantly expressed by teratocytes, which are extra-embryonic cells released by parasitoid wasps into their hosts during larval eclosion.

Its subcellular location is the secreted. Its function is as follows. This endoparasitoid wasp peptide has immununosuppressive, antimicrobial and insecticidal activities. Suppress cellular immunity which is detectable as a reduction of hemocyte encapsulation in the host. Shows moderate antifungal activity against C.albicans (MIC=4 ug/ml). In vivo, ingestion of this peptide (probably at excessive doses) increases larval mortality and reduces leaf consumption of D.saccharalis, a permissive host for C.flavipes. The protein is Teratocyte protein CftICK-II of Cotesia flavipes (Parasitic wasp).